Here is a 104-residue protein sequence, read N- to C-terminus: L-rhamnose mutarotase (104 aa).

Tyrosine 18 contacts substrate. The active-site Proton donor is the histidine 22. Substrate-binding positions include tyrosine 41 and 76–77 (WW).

It belongs to the rhamnose mutarotase family. Homodimer.

It is found in the cytoplasm. It carries out the reaction alpha-L-rhamnose = beta-L-rhamnose. It participates in carbohydrate metabolism; L-rhamnose metabolism. Involved in the anomeric conversion of L-rhamnose. In Cronobacter sakazakii (strain ATCC BAA-894) (Enterobacter sakazakii), this protein is L-rhamnose mutarotase.